Reading from the N-terminus, the 752-residue chain is Photosystem I P700 chlorophyll a apoprotein A1 (752 aa).

Transmembrane regions (helical) follow at residues 73–96 (IFSA…FHGA), 159–182 (LYVT…FHYH), 198–222 (LNHH…HVSA), 294–312 (IAHH…GHQY), 349–372 (WHAQ…HHMY), 388–414 (LCIF…IFMV), 436–458 (AIIS…LYIH), and 533–551 (FLIH…LILL). [4Fe-4S] cluster contacts are provided by C575 and C584. Helical transmembrane passes span 591–612 (HVFL…HFSW) and 666–688 (LSAY…MFLF). Residue H677 participates in chlorophyll a' binding. Chlorophyll a contacts are provided by M685 and Y693. W694 is a phylloquinone binding site. The chain crosses the membrane as a helical span at residues 726-746 (AVGVAHYLLGGIATTWAFFHA).

Belongs to the PsaA/PsaB family. In terms of assembly, the PsaA/B heterodimer binds the P700 chlorophyll special pair and subsequent electron acceptors. PSI consists of a core antenna complex that captures photons, and an electron transfer chain that converts photonic excitation into a charge separation. The cyanobacterial PSI reaction center is composed of one copy each of PsaA,B,C,D,E,F,I,J,K,L,M and X, and forms trimeric complexes. Requires PSI electron transfer chain: 5 chlorophyll a, 1 chlorophyll a', 2 phylloquinones and 3 4Fe-4S clusters. PSI core antenna: 90 chlorophyll a, 22 carotenoids, 3 phospholipids and 1 galactolipid. P700 is a chlorophyll a/chlorophyll a' dimer, A0 is one or more chlorophyll a, A1 is one or both phylloquinones and FX is a shared 4Fe-4S iron-sulfur center. as cofactor.

It is found in the cellular thylakoid membrane. It catalyses the reaction reduced [plastocyanin] + hnu + oxidized [2Fe-2S]-[ferredoxin] = oxidized [plastocyanin] + reduced [2Fe-2S]-[ferredoxin]. Its function is as follows. PsaA and PsaB bind P700, the primary electron donor of photosystem I (PSI), as well as the electron acceptors A0, A1 and FX. PSI is a plastocyanin/cytochrome c6-ferredoxin oxidoreductase, converting photonic excitation into a charge separation, which transfers an electron from the donor P700 chlorophyll pair to the spectroscopically characterized acceptors A0, A1, FX, FA and FB in turn. Oxidized P700 is reduced on the lumenal side of the thylakoid membrane by plastocyanin or cytochrome c6. The polypeptide is Photosystem I P700 chlorophyll a apoprotein A1 (Nostoc punctiforme (strain ATCC 29133 / PCC 73102)).